The chain runs to 247 residues: Virulence plasmid protein pGP6-D (247 aa).

This sequence belongs to the UPF0137 (pGP6-D) family.

This is Virulence plasmid protein pGP6-D from Chlamydia trachomatis.